The following is a 332-amino-acid chain: NADH-quinone oxidoreductase subunit H (332 aa).

The next 9 helical transmembrane spans lie at 4–24 (FAFF…IFAS), 44–64 (IGPD…MIKL), 78–98 (FIFA…LAAI), 120–140 (VALL…FLGG), 165–185 (VGAL…LVDI), 194–214 (FSWL…ALFI), 255–275 (IAGA…FWII), 279–299 (IMMI…RAAF), and 312–332 (YLIL…TVLL).

This sequence belongs to the complex I subunit 1 family. In terms of assembly, NDH-1 is composed of 14 different subunits. Subunits NuoA, H, J, K, L, M, N constitute the membrane sector of the complex.

It localises to the cell inner membrane. The enzyme catalyses a quinone + NADH + 5 H(+)(in) = a quinol + NAD(+) + 4 H(+)(out). Its function is as follows. NDH-1 shuttles electrons from NADH, via FMN and iron-sulfur (Fe-S) centers, to quinones in the respiratory chain. The immediate electron acceptor for the enzyme in this species is believed to be ubiquinone. Couples the redox reaction to proton translocation (for every two electrons transferred, four hydrogen ions are translocated across the cytoplasmic membrane), and thus conserves the redox energy in a proton gradient. This subunit may bind ubiquinone. The sequence is that of NADH-quinone oxidoreductase subunit H from Campylobacter jejuni subsp. jejuni serotype O:23/36 (strain 81-176).